Reading from the N-terminus, the 561-residue chain is Small ribosomal subunit protein bS1 (561 aa).

6 S1 motif domains span residues 22–88, 106–172, 193–261, 278–348, 365–435, and 452–521; these read GEVI…LSRE, GDIL…VSRR, GSVI…LGMK, GTRL…LGMK, GDKI…LGIK, and GSLV…LSVK.

The protein belongs to the bacterial ribosomal protein bS1 family.

Binds mRNA; thus facilitating recognition of the initiation point. It is needed to translate mRNA with a short Shine-Dalgarno (SD) purine-rich sequence. This Neisseria meningitidis serogroup B (strain ATCC BAA-335 / MC58) protein is Small ribosomal subunit protein bS1 (rpsA).